Reading from the N-terminus, the 84-residue chain is Acyl carrier protein (84 aa).

The 77-residue stretch at 4–80 folds into the Carrier domain; that stretch reads SETFEKVKKI…EAVDYINNQV (77 aa). An O-(pantetheine 4'-phosphoryl)serine modification is found at Ser-40.

The protein belongs to the acyl carrier protein (ACP) family. Post-translationally, 4'-phosphopantetheine is transferred from CoA to a specific serine of apo-ACP by AcpS. This modification is essential for activity because fatty acids are bound in thioester linkage to the sulfhydryl of the prosthetic group.

It is found in the cytoplasm. It participates in lipid metabolism; fatty acid biosynthesis. Functionally, carrier of the growing fatty acid chain in fatty acid biosynthesis. In Nostoc sp. (strain PCC 7120 / SAG 25.82 / UTEX 2576), this protein is Acyl carrier protein.